Consider the following 208-residue polypeptide: Uracil phosphoribosyltransferase (208 aa).

5-phospho-alpha-D-ribose 1-diphosphate is bound by residues arginine 78, arginine 103, and 130 to 138; that span reads DPMLATGGS. Uracil is bound by residues isoleucine 193 and 198–200; that span reads GDA. Aspartate 199 serves as a coordination point for 5-phospho-alpha-D-ribose 1-diphosphate.

The protein belongs to the UPRTase family. It depends on Mg(2+) as a cofactor.

It carries out the reaction UMP + diphosphate = 5-phospho-alpha-D-ribose 1-diphosphate + uracil. It participates in pyrimidine metabolism; UMP biosynthesis via salvage pathway; UMP from uracil: step 1/1. Its activity is regulated as follows. Allosterically activated by GTP. Its function is as follows. Catalyzes the conversion of uracil and 5-phospho-alpha-D-ribose 1-diphosphate (PRPP) to UMP and diphosphate. In Pectobacterium carotovorum subsp. carotovorum (strain PC1), this protein is Uracil phosphoribosyltransferase.